Consider the following 483-residue polypeptide: Aspartyl/glutamyl-tRNA(Asn/Gln) amidotransferase subunit B (483 aa).

Belongs to the GatB/GatE family. GatB subfamily. In terms of assembly, heterotrimer of A, B and C subunits.

It catalyses the reaction L-glutamyl-tRNA(Gln) + L-glutamine + ATP + H2O = L-glutaminyl-tRNA(Gln) + L-glutamate + ADP + phosphate + H(+). The catalysed reaction is L-aspartyl-tRNA(Asn) + L-glutamine + ATP + H2O = L-asparaginyl-tRNA(Asn) + L-glutamate + ADP + phosphate + 2 H(+). Allows the formation of correctly charged Asn-tRNA(Asn) or Gln-tRNA(Gln) through the transamidation of misacylated Asp-tRNA(Asn) or Glu-tRNA(Gln) in organisms which lack either or both of asparaginyl-tRNA or glutaminyl-tRNA synthetases. The reaction takes place in the presence of glutamine and ATP through an activated phospho-Asp-tRNA(Asn) or phospho-Glu-tRNA(Gln). This Thermomicrobium roseum (strain ATCC 27502 / DSM 5159 / P-2) protein is Aspartyl/glutamyl-tRNA(Asn/Gln) amidotransferase subunit B.